A 350-amino-acid chain; its full sequence is Protein Wnt-2 (350 aa).

Positions 1 to 25 (MNFLPNGICFYLSVAICWFSSRVDA) are cleaved as a signal peptide. Disulfide bonds link cysteine 74–cysteine 85, cysteine 125–cysteine 133, cysteine 135–cysteine 155, cysteine 204–cysteine 218, cysteine 206–cysteine 213, cysteine 276–cysteine 307, cysteine 292–cysteine 302, cysteine 306–cysteine 346, cysteine 322–cysteine 337, cysteine 324–cysteine 334, and cysteine 329–cysteine 330. Residue asparagine 132 is glycosylated (N-linked (GlcNAc...) asparagine). The O-palmitoleoyl serine; by PORCN moiety is linked to residue serine 210. An N-linked (GlcNAc...) asparagine glycan is attached at asparagine 293.

This sequence belongs to the Wnt family. In terms of processing, palmitoleoylation is required for efficient binding to frizzled receptors. Depalmitoleoylation leads to Wnt signaling pathway inhibition.

The protein localises to the secreted. Its subcellular location is the extracellular space. It localises to the extracellular matrix. In terms of biological role, ligand for members of the frizzled family of seven transmembrane receptors. Functions in the canonical Wnt signaling pathway that results in activation of transcription factors of the TCF/LEF family. The polypeptide is Protein Wnt-2 (wnt2) (Danio rerio (Zebrafish)).